The sequence spans 785 residues: Mitochondrial intermediate peptidase (785 aa).

The N-terminal 43 residues, 1 to 43 (MLTRPAQNALLKSMQPLFRFRGCLLAKSTSTPRRDISTSSRKL), are a transit peptide targeting the mitochondrion. H567 is a Zn(2+) binding site. The active site involves E568. Residues H571 and H574 each coordinate Zn(2+).

The protein belongs to the peptidase M3 family. Requires Zn(2+) as cofactor.

Its subcellular location is the mitochondrion matrix. It catalyses the reaction Release of an N-terminal octapeptide as second stage of processing of some proteins imported into the mitochondrion.. In terms of biological role, cleaves proteins, imported into the mitochondrion, to their mature size. While most mitochondrial precursor proteins are processed to the mature form in one step by mitochondrial processing peptidase (MPP), the sequential cleavage by MIP of an octapeptide after initial processing by MPP is a required step for a subgroup of nuclear-encoded precursor proteins destined for the matrix or the inner membrane. The chain is Mitochondrial intermediate peptidase (OCT1) from Pleurotus djamor (Pink oyster mushroom).